We begin with the raw amino-acid sequence, 512 residues long: ATP synthase subunit alpha (512 aa).

169–176 is a binding site for ATP; the sequence is GDRQTGKT.

The protein belongs to the ATPase alpha/beta chains family. In terms of assembly, F-type ATPases have 2 components, CF(1) - the catalytic core - and CF(0) - the membrane proton channel. CF(1) has five subunits: alpha(3), beta(3), gamma(1), delta(1), epsilon(1). CF(0) has three main subunits: a(1), b(2) and c(9-12). The alpha and beta chains form an alternating ring which encloses part of the gamma chain. CF(1) is attached to CF(0) by a central stalk formed by the gamma and epsilon chains, while a peripheral stalk is formed by the delta and b chains.

Its subcellular location is the cell inner membrane. The catalysed reaction is ATP + H2O + 4 H(+)(in) = ADP + phosphate + 5 H(+)(out). Produces ATP from ADP in the presence of a proton gradient across the membrane. The alpha chain is a regulatory subunit. This Dechloromonas aromatica (strain RCB) protein is ATP synthase subunit alpha.